Reading from the N-terminus, the 259-residue chain is MTMELQRPREAAALTLSLLDLTNLREDCTPQQIATLCQRAHTEFGNTAAICIWPRFVAQARAAFGKDHTIRIATVVNFPSGDLDVATVVAETEAAIGDGADEIDLVIPYRKFMAGDESAVAEMIAAVRKACAAPVLLKVILETGELKDKALIRRASEIAIAEGADFIKTSTGKVAVNATLEAADIMLQAIRDSKKKVGFKPAGGIGTVEDATLYLRLAETIMAPNWAMPSTFRFGASGVLDDVLNVLAGGEPAKAASGY.

The Proton donor/acceptor role is filled by Asp-104. Lys-168 serves as the catalytic Schiff-base intermediate with acetaldehyde. Catalysis depends on Lys-200, which acts as the Proton donor/acceptor.

This sequence belongs to the DeoC/FbaB aldolase family. DeoC type 2 subfamily.

Its subcellular location is the cytoplasm. It catalyses the reaction 2-deoxy-D-ribose 5-phosphate = D-glyceraldehyde 3-phosphate + acetaldehyde. The protein operates within carbohydrate degradation; 2-deoxy-D-ribose 1-phosphate degradation; D-glyceraldehyde 3-phosphate and acetaldehyde from 2-deoxy-alpha-D-ribose 1-phosphate: step 2/2. Catalyzes a reversible aldol reaction between acetaldehyde and D-glyceraldehyde 3-phosphate to generate 2-deoxy-D-ribose 5-phosphate. This Agrobacterium fabrum (strain C58 / ATCC 33970) (Agrobacterium tumefaciens (strain C58)) protein is Deoxyribose-phosphate aldolase.